Consider the following 350-residue polypeptide: MSLEAIKYKKGRLEILNQLLLPHESTYEVVSDTEDGWKAIREMKVRGAPAIAIVGALSLAAEIYSKPFASSEELAEFVKQKLQYLNTARPTAVNMTNAVIELTAFVADLTKCSPKDMKQKLLSKIEGMLSEDIAQNKAIGKFGAESILGAVGGPVRMLTHCNTGSLATAGYGTGLGVIRSIHEMKQLEHVYCTETRPYNQGSRLTAYELVYEKIPSTLIADSAVSMAMKTKKISAVVVGADRIACNGDTANKIGTYQLALAAKHHEIPFYVAAPVTSIDFSLVNGDAIVIEERSPLELTSVKGIPVAASGIGVWNPAFDVTPAGLITGIVTEHGTFSPQEMKDKLLALKG.

Asp-241 acts as the Proton donor in catalysis.

The protein belongs to the eIF-2B alpha/beta/delta subunits family. MtnA subfamily.

Its subcellular location is the cytoplasm. It is found in the nucleus. The catalysed reaction is 5-(methylsulfanyl)-alpha-D-ribose 1-phosphate = 5-(methylsulfanyl)-D-ribulose 1-phosphate. It participates in amino-acid biosynthesis; L-methionine biosynthesis via salvage pathway; L-methionine from S-methyl-5-thio-alpha-D-ribose 1-phosphate: step 1/6. Its function is as follows. Catalyzes the interconversion of methylthioribose-1-phosphate (MTR-1-P) into methylthioribulose-1-phosphate (MTRu-1-P). The chain is Methylthioribose-1-phosphate isomerase from Nematostella vectensis (Starlet sea anemone).